We begin with the raw amino-acid sequence, 409 residues long: Endoglucanase B (409 aa).

An N-terminal signal peptide occupies residues 1–21 (MKLKRIAALLTAAVMSVGVMA). A disordered region spans residues 23-66 (CGGSKSDDKSKADTKSAAETSGAEGDSSESEEIPVSQTHTNDPM). A compositionally biased stretch (basic and acidic residues) spans 27-38 (KSDDKSKADTKS). Residues 57–66 (VSQTHTNDPM) are compositionally biased toward polar residues. Residue Glu-212 is the Proton donor of the active site. The active-site Nucleophile is the Glu-332.

This sequence belongs to the glycosyl hydrolase 5 (cellulase A) family.

It carries out the reaction Endohydrolysis of (1-&gt;4)-beta-D-glucosidic linkages in cellulose, lichenin and cereal beta-D-glucans.. The chain is Endoglucanase B (celB) from Ruminococcus albus.